Reading from the N-terminus, the 364-residue chain is 3-dehydroquinate synthase (364 aa).

NAD(+) contacts are provided by residues 75-80 (DGEQYK), 109-113 (GVIGD), 133-134 (TT), K146, K155, and 173-176 (TLDT). Zn(2+) is bound by residues E188, H251, and H268.

This sequence belongs to the sugar phosphate cyclases superfamily. Dehydroquinate synthase family. Requires Co(2+) as cofactor. The cofactor is Zn(2+). NAD(+) serves as cofactor.

It is found in the cytoplasm. It carries out the reaction 7-phospho-2-dehydro-3-deoxy-D-arabino-heptonate = 3-dehydroquinate + phosphate. Its pathway is metabolic intermediate biosynthesis; chorismate biosynthesis; chorismate from D-erythrose 4-phosphate and phosphoenolpyruvate: step 2/7. In terms of biological role, catalyzes the conversion of 3-deoxy-D-arabino-heptulosonate 7-phosphate (DAHP) to dehydroquinate (DHQ). The sequence is that of 3-dehydroquinate synthase from Dechloromonas aromatica (strain RCB).